Here is an 870-residue protein sequence, read N- to C-terminus: MAMEVTQLLINAQSIDGTVRKHAEESLKQFQEQNLAGFLLSLAGELANDEKPVDSRKLAGLVLKNALDAKEQHRKYELVQRWLALDMSTKSQIRAFLLKTLSAPVPDVRSTASQVIAKVAGIELPQKQWPELIVSLLSNIHQLPAHVKQATLETLGYLCEEVSPDVVEQEHVNKILTAVVQGMNAAEGNTDVRLAATRALYMALGFAQANFNNDMERDYIMRVVCEATLSPEVKIRQAAFECLVSIASTYYEKLAHYMQDIFNITAKAVREDDESVALQAIEFWSSICDEEIDILEEYGGEFAGDSDVPCFYFTKQALPGLVPLLLETLLKQEEDQDLDEGAWNIAMAGGTCLGLVARAVGDDIVPHVMPFIEEKISKPDWREREAATYAFGSILEGPSADKLMAIVNAALTFMLNALTNDPSNHVKDTTAWTLGRIFEFLHGSTIETPIINQANCQQIITVLIQSMNDAPNVAEKACGALYFLAQGYEDIGPSSPLTPFFQEIIKSLLAVAHREDATESRLRTAAYEALNEVVRCSTDETSTMVLQLVPVIMMELHNTLEGEKLSLDEREKQNELQGLLCGCLQVIIQKLGSEPTKSKFMEYADQMMGLFLRVFGCRSATAHEEAMLAIGALAYAAGPNFAKYMPEFYKYLEMGLQNFEEYQVCAVTVGVVGDVCRALEDKILPYCDGIMTQLLKDLSSNQLHRSVKPPIFSCFGDIALAIGEDFDKYWRYSMPMLQSAAELSAHSAGADDEMTEYTNSLRNGILEAYSGIFQGFKNSAKTQLLIPFAPHILQFLDSIYMEKDMDEVVMKTAIGVLGDLADTLGSHVGGLIQQSVSSKEFLNECLSSEDHTIKEAAEWAKHAITRAISV.

An N-acetylalanine modification is found at Ala2. HEAT repeat units lie at residues Glu4–Gln33, Leu35–Leu67, Met87–Gln126, Leu132–Glu161, Val172–Leu204, Asp214–Thr249, Ala255–Gly304, Phe313–Gly361, Val365–Leu395, Leu403–Phe440, Cys456–Gly492, Thr498–Arg535, Ser542–Ile588, Thr596–Ala637, Ala642–Leu679, Leu684–Ile722, Trp730–Phe776, and Ser826–Ile868. The Importin N-terminal domain occupies Ala23–Ala103.

This sequence belongs to the importin beta family. Importin beta-1 subfamily. Forms a complex with the importin subunits alpha IMPA1 or IMPA2, the nucleoporin NUP62 and the Ran-GTP-binding proteins RAN1, RAN2 or RAN3. As to expression, expressed in roots, cotyledons, leaves, stems, petals, stamen, stigma, siliques, embryos and guard cells.

Its subcellular location is the cytoplasm. It is found in the nucleus. Functionally, acts as a negative effector of drought tolerance. Involved in the regulation of stomatal closure and in the abscisic acid (ABA)-mediated pathway that lead to drought tolerance. Does not directly mediate nuclear import of ABI1 and ABI2 which are key regulators of the ABA signaling pathway. May be involved in nuclear translocation of other type 2C protein phosphatases that mediate ABA signaling. This chain is Importin subunit beta-1, found in Arabidopsis thaliana (Mouse-ear cress).